The chain runs to 981 residues: uncharacterized protein (981 aa).

5 disordered regions span residues 65–133 (NIDN…SNNS), 149–463 (SSNS…NKIE), 491–580 (SNNI…DSPL), 592–834 (EQTN…LNQV), and 861–891 (VQND…NDGN). The span at 75-88 (SSDDDDDDDDDDDY) shows a compositional bias: acidic residues. Low complexity-rich tracts occupy residues 89–133 (NNNN…SNNS), 149–158 (SSNSINNNDN), and 170–181 (SAKTTSSLTSSK). The segment covering 182-195 (RSLDSRNRNRDRSY) has biased composition (basic and acidic residues). Residues 196 to 206 (TRSRSRSRSRS) show a composition bias toward basic residues. Low complexity predominate over residues 207–227 (YSRGFSSLSRSRSRSRSISSR). Basic residues predominate over residues 228–269 (SRSRSRSRRSRSRSSRSRSRSRSKSKSKSRRSRSRSRSRRSR). The segment covering 270 to 292 (SRSDSRSRSDSRGRSRSRSDSRK) has biased composition (basic and acidic residues). Over residues 314–358 (SSKRHQNSRKRNRSYSRSRTRSWSRSRTRSRSRRRYGGRTFRSPR) the composition is skewed to basic residues. A compositionally biased stretch (basic and acidic residues) spans 359 to 452 (RSRDDSRDRG…SQSPHNEKNK (94 aa)). Low complexity predominate over residues 491–553 (SNNINNNNIK…SHNNTNGNVN (63 aa)). 2 stretches are compositionally biased toward polar residues: residues 554-576 (GVSK…STDL) and 605-622 (ESNN…SSTE). Residues 623 to 634 (NENKNRENEKNN) are compositionally biased toward basic and acidic residues. Low complexity-rich tracts occupy residues 635-820 (SENS…NNNS) and 867-891 (SSPI…NDGN).

This is an uncharacterized protein from Dictyostelium discoideum (Social amoeba).